The chain runs to 303 residues: UDP-3-O-acyl-N-acetylglucosamine deacetylase (303 aa).

3 residues coordinate Zn(2+): His77, His236, and Asp240. The Proton donor role is filled by His263.

Belongs to the LpxC family. The cofactor is Zn(2+).

The catalysed reaction is a UDP-3-O-[(3R)-3-hydroxyacyl]-N-acetyl-alpha-D-glucosamine + H2O = a UDP-3-O-[(3R)-3-hydroxyacyl]-alpha-D-glucosamine + acetate. The protein operates within glycolipid biosynthesis; lipid IV(A) biosynthesis; lipid IV(A) from (3R)-3-hydroxytetradecanoyl-[acyl-carrier-protein] and UDP-N-acetyl-alpha-D-glucosamine: step 2/6. In terms of biological role, catalyzes the hydrolysis of UDP-3-O-myristoyl-N-acetylglucosamine to form UDP-3-O-myristoylglucosamine and acetate, the committed step in lipid A biosynthesis. In Ruthia magnifica subsp. Calyptogena magnifica, this protein is UDP-3-O-acyl-N-acetylglucosamine deacetylase.